Reading from the N-terminus, the 41-residue chain is Large ribosomal subunit protein bL36 (41 aa).

Belongs to the bacterial ribosomal protein bL36 family.

The chain is Large ribosomal subunit protein bL36 from Rhodopseudomonas palustris (strain TIE-1).